The primary structure comprises 444 residues: Tol-Pal system protein TolB (444 aa).

The signal sequence occupies residues 1-19 (MRNIIYFILSLLFSFKGYA).

Belongs to the TolB family. As to quaternary structure, the Tol-Pal system is composed of five core proteins: the inner membrane proteins TolA, TolQ and TolR, the periplasmic protein TolB and the outer membrane protein Pal. They form a network linking the inner and outer membranes and the peptidoglycan layer.

It localises to the periplasm. Functionally, part of the Tol-Pal system, which plays a role in outer membrane invagination during cell division and is important for maintaining outer membrane integrity. The polypeptide is Tol-Pal system protein TolB (Rickettsia felis (strain ATCC VR-1525 / URRWXCal2) (Rickettsia azadi)).